A 439-amino-acid polypeptide reads, in one-letter code: Aspartate--tRNA(Asp/Asn) ligase (439 aa).

Residue E177 participates in L-aspartate binding. The aspartate stretch occupies residues Q199 to K202. R221 lines the L-aspartate pocket. Residues R221–E223, R229–L231, and E362 each bind ATP. E362 and S365 together coordinate Mg(2+). Residues S365 and R369 each contribute to the L-aspartate site. Residue G410–R413 participates in ATP binding.

Belongs to the class-II aminoacyl-tRNA synthetase family. Type 2 subfamily. Homodimer. Mg(2+) is required as a cofactor.

Its subcellular location is the cytoplasm. The catalysed reaction is tRNA(Asx) + L-aspartate + ATP = L-aspartyl-tRNA(Asx) + AMP + diphosphate. In terms of biological role, aspartyl-tRNA synthetase with relaxed tRNA specificity since it is able to aspartylate not only its cognate tRNA(Asp) but also tRNA(Asn). Reaction proceeds in two steps: L-aspartate is first activated by ATP to form Asp-AMP and then transferred to the acceptor end of tRNA(Asp/Asn). This chain is Aspartate--tRNA(Asp/Asn) ligase, found in Methanosphaera stadtmanae (strain ATCC 43021 / DSM 3091 / JCM 11832 / MCB-3).